A 516-amino-acid polypeptide reads, in one-letter code: Arginyl-tRNA--protein transferase 1 (516 aa).

A compositionally biased stretch (basic and acidic residues) spans 150-180; sequence IESEEKEKEKSIKKEGSKEFIHPQSIEEKLG. The disordered stretch occupies residues 150–206; sequence IESEEKEKEKSIKKEGSKEFIHPQSIEEKLGSGEPSHPIKVHIGPKPGKGADLSKPP.

The protein belongs to the R-transferase family. Monomer. Interacts with LIAT1; LIAT1 is not a substrate of ATE1, the interaction takes place in the cytoplasm and seems to increase ATE1 arginyltransferase activity. In terms of assembly, interacts with LIAT1; has a higher affinity than the other isoforms. Widely expressed.

It is found in the nucleus. The protein localises to the cytoplasm. The catalysed reaction is an N-terminal L-alpha-aminoacyl-[protein] + L-arginyl-tRNA(Arg) = an N-terminal L-arginyl-L-aminoacyl-[protein] + tRNA(Arg) + H(+). Involved in the post-translational conjugation of arginine to the N-terminal aspartate or glutamate of a protein. This arginylation is required for degradation of the protein via the ubiquitin pathway. Does not arginylate cysteine residues. This Mus musculus (Mouse) protein is Arginyl-tRNA--protein transferase 1.